A 194-amino-acid chain; its full sequence is Small ribosomal subunit protein uS5 (194 aa).

One can recognise an S5 DRBM domain in the interval 26–89 (LEEKVVEIRR…ADAKKRIIKV (64 aa)).

It belongs to the universal ribosomal protein uS5 family. In terms of assembly, part of the 30S ribosomal subunit. Contacts proteins S4 and S8.

With S4 and S12 plays an important role in translational accuracy. Functionally, located at the back of the 30S subunit body where it stabilizes the conformation of the head with respect to the body. The polypeptide is Small ribosomal subunit protein uS5 (Sulfurihydrogenibium sp. (strain YO3AOP1)).